The sequence spans 926 residues: Serine/threonine-protein kinase pakE (926 aa).

Polar residues predominate over residues 36–55; it reads SSRELPTQDSSTKTSNITTP. Disordered regions lie at residues 36 to 257 and 546 to 576; these read SSRE…RPKL and QLNN…TTTT. The segment covering 56–107 has biased composition (low complexity); it reads NNNNNNNNNNNNNNNNNNNNNNNNNNNNNNNNNNNNNNNNNNNNNNNNNNNN. The span at 108-117 shows a compositional bias: polar residues; it reads TPTSLNSSWK. A compositionally biased stretch (low complexity) spans 134–173; sequence NNNNNVGSPNNQSTSQTNHQQPPPQQLQQQQSLSSTSTPS. Polar residues predominate over residues 183-204; it reads RRNVTSPNLTRSDPTVPITNSR. Over residues 215–253 the composition is skewed to low complexity; that stretch reads PQFQLNNLNFDDNNDHSTTTTNNNNNNNNNNSNNNNNNN. Positions 534–567 form a coiled coil; that stretch reads LDFEKELKENQQQLNNNNNNNNNNNNNNNNNNNN. Residues 650–903 enclose the Protein kinase domain; sequence FEFKEKLGQG…VIDLLSHDFI (254 aa). Residues 656 to 664 and K679 contribute to the ATP site; that span reads LGQGGYGAV. D771 (proton acceptor) is an active-site residue.

This sequence belongs to the protein kinase superfamily. STE Ser/Thr protein kinase family. STE20 subfamily. Mg(2+) serves as cofactor.

It carries out the reaction L-seryl-[protein] + ATP = O-phospho-L-seryl-[protein] + ADP + H(+). It catalyses the reaction L-threonyl-[protein] + ATP = O-phospho-L-threonyl-[protein] + ADP + H(+). Functionally, may play a role in responding to changes in chemoattractant levels. In Dictyostelium discoideum (Social amoeba), this protein is Serine/threonine-protein kinase pakE.